We begin with the raw amino-acid sequence, 268 residues long: Tryptophan synthase alpha chain (268 aa).

Active-site proton acceptor residues include glutamate 49 and aspartate 60.

This sequence belongs to the TrpA family. As to quaternary structure, tetramer of two alpha and two beta chains.

The enzyme catalyses (1S,2R)-1-C-(indol-3-yl)glycerol 3-phosphate + L-serine = D-glyceraldehyde 3-phosphate + L-tryptophan + H2O. It participates in amino-acid biosynthesis; L-tryptophan biosynthesis; L-tryptophan from chorismate: step 5/5. In terms of biological role, the alpha subunit is responsible for the aldol cleavage of indoleglycerol phosphate to indole and glyceraldehyde 3-phosphate. This is Tryptophan synthase alpha chain from Escherichia coli (strain SMS-3-5 / SECEC).